The primary structure comprises 232 residues: Ureidoacrylate amidohydrolase RutB (232 aa).

The active-site Proton acceptor is the D26. K135 is a catalytic residue. C168 acts as the Nucleophile in catalysis.

Belongs to the isochorismatase family. RutB subfamily.

It carries out the reaction (Z)-3-ureidoacrylate + H2O + H(+) = (Z)-3-aminoacrylate + NH4(+) + CO2. The catalysed reaction is (Z)-3-ureidoacrylate + H2O = (Z)-3-aminoacrylate + carbamate + H(+). It catalyses the reaction (Z)-2-methylureidoacrylate + H2O + H(+) = (Z)-2-methylaminoacrylate + NH4(+) + CO2. Its function is as follows. Hydrolyzes ureidoacrylate to form aminoacrylate and carbamate. The carbamate hydrolyzes spontaneously, thereby releasing one of the nitrogen atoms of the pyrimidine ring as ammonia and one of its carbon atoms as CO2. The polypeptide is Ureidoacrylate amidohydrolase RutB (Cronobacter turicensis (strain DSM 18703 / CCUG 55852 / LMG 23827 / z3032)).